Here is a 539-residue protein sequence, read N- to C-terminus: G protein-coupled receptor associated sorting protein 3 (539 aa).

Residues 1–10 (MTGSKNKARA) are compositionally biased toward basic residues. Disordered regions lie at residues 1–111 (MTGS…DSWF) and 132–170 (NSVA…EEEE). 2 stretches are compositionally biased toward basic and acidic residues: residues 66–80 (VVAE…ESKA) and 88–106 (FNHK…DKPS). Residues 132 to 146 (NSVAKCENKPSTSIQ) show a composition bias toward polar residues.

This sequence belongs to the GPRASP family. Homodimer.

Its subcellular location is the cytoplasm. The protein resides in the nucleus. Its function is as follows. Survival and differentiation promoting protein that plays a role in the regulation of neurosynaptogenesis. Induces phosphatase PP2A activity which results in APP dephosphorylation and inhibits BACE1-mediated processing of APP. This chain is G protein-coupled receptor associated sorting protein 3 (Gprasp3), found in Rattus norvegicus (Rat).